Here is a 91-residue protein sequence, read N- to C-terminus: LYR motif-containing protein 4 (91 aa).

2 residues coordinate pantetheine 4'-phosphate: arginine 6 and lysine 44. Lysine 47 carries the post-translational modification N6-succinyllysine.

Belongs to the complex I LYR family. In terms of assembly, homodimer. Component of the mitochondrial core iron-sulfur cluster (ISC) complex composed of NFS1, LYRM4, NDUFAB1, ISCU, FXN, and FDX2; this complex is a heterohexamer containing two copies of each monomer. Component of the cyteine desulfurase complex composed of NFS1, LYRM4 and NDUFAB1; this complex contributes to the stability and cysteine desulfurase activity of NFS1. Interacts with FXN; this interaction is nickel-dependent. Interacts with the cytoplasmic form of NFS1; the complex increases the stability of NFS1. Forms a complex with the cytoplasmic form of NFS1; this complex increases the stability and cysteine desulfurase activity of NFS1. Interacts with NFS1. Component of a complex composed of FXN, NFS1, LYRM4 and ISCU.

Its subcellular location is the mitochondrion. The protein localises to the nucleus. The protein operates within cofactor biosynthesis; iron-sulfur cluster biosynthesis. In terms of biological role, stabilizing factor, of the core iron-sulfur cluster (ISC) assembly complex, that regulates, in association with NDUFAB1, the stability and the cysteine desulfurase activity of NFS1 and participates in the [2Fe-2S] clusters assembly on the scaffolding protein ISCU. The core iron-sulfur cluster (ISC) assembly complex is involved in the de novo synthesis of a [2Fe-2S] cluster, the first step of the mitochondrial iron-sulfur protein biogenesis. This process is initiated by the cysteine desulfurase complex (NFS1:LYRM4:NDUFAB1) that produces persulfide which is delivered on the scaffold protein ISCU in a FXN-dependent manner. Then this complex is stabilized by FDX2 which provides reducing equivalents to accomplish the [2Fe-2S] cluster assembly. Finally, the [2Fe-2S] cluster is transferred from ISCU to chaperone proteins, including HSCB, HSPA9 and GLRX5. May also participates in the iron-sulfur protein biogenesis in the cytoplasm through its interaction with the cytoplasmic form of NFS1. The sequence is that of LYR motif-containing protein 4 from Mus musculus (Mouse).